Reading from the N-terminus, the 75-residue chain is UPF0352 protein PMI0824 (75 aa).

The protein belongs to the UPF0352 family.

The protein is UPF0352 protein PMI0824 of Proteus mirabilis (strain HI4320).